The chain runs to 390 residues: Sorting nexin C1711.11 (390 aa).

The region spanning 1-123 (MLKCTIKNEQ…QFLENNSWKS (123 aa)) is the PX domain. A 1,2-diacyl-sn-glycero-3-phospho-(1D-myo-inositol-3-phosphate) is bound by residues arginine 44, lysine 70, and arginine 89.

Belongs to the sorting nexin family.

It is found in the cytoplasm. The protein resides in the membrane. The protein is Sorting nexin C1711.11 of Schizosaccharomyces pombe (strain 972 / ATCC 24843) (Fission yeast).